A 497-amino-acid polypeptide reads, in one-letter code: Protein adenylyltransferase Fic (497 aa).

The interval 1–30 (MGATDQALEAESKTTEPPKTPPVPEQHDRP) is disordered. Residues 38–58 (LCHLLVLLFSGGLAAITLHIF) traverse the membrane as a helical segment. TPR repeat units lie at residues 123–156 (ALGA…APRH) and 157–191 (PTVL…SPSN). The short motif at 248-253 (TVGIEG) is the Inhibitory (S/T)XXXE(G/N) motif element. Residues Glu252 and 333–336 (VGGH) each bind ATP. Residues 302 to 437 (ITIKDILELH…IRPFVRFIAD (136 aa)) enclose the Fido domain. Residue His380 is part of the active site. ATP is bound by residues 384–391 (DGNGRTSR), 416–417 (YY), and Asn424. The interval 468–497 (GEGVPQLQSSQMGGGASIPEFHESGSGSLP) is disordered.

Belongs to the fic family. As to quaternary structure, homodimer.

It localises to the membrane. It carries out the reaction L-tyrosyl-[protein] + ATP = O-(5'-adenylyl)-L-tyrosyl-[protein] + diphosphate. The catalysed reaction is L-threonyl-[protein] + ATP = 3-O-(5'-adenylyl)-L-threonyl-[protein] + diphosphate. The enzyme catalyses 3-O-(5'-adenylyl)-L-threonyl-[protein] + H2O = L-threonyl-[protein] + AMP + H(+). Its activity is regulated as follows. The side chain of Glu-252 determines which of the two opposing activities (AMPylase or de-AMPylase) will take place. In response to endoplasmic reticulum stress, mediates de-AMPylase activity. Adenylyltransferase activity is inhibited by the inhibitory helix present at the N-terminus: Glu-252 binds ATP and competes with ATP-binding at Arg-391, thereby preventing adenylyltransferase activity. In unstressed cells, disengagement of Glu-252 promotes adenylyltransferase activity. Activation dissociates ATP-binding from Glu-252, allowing ordered binding of the entire ATP moiety with the alpha-phosphate in an orientation that is productive for accepting an incoming target hydroxyl side chain. Functionally, protein that can both mediate the addition of adenosine 5'-monophosphate (AMP) to specific residues of target proteins (AMPylation), and the removal of the same modification from target proteins (de-AMPylation), depending on the context. The side chain of Glu-252 determines which of the two opposing activities (AMPylase or de-AMPylase) will take place. Acts as a key regulator of the unfolded protein response (UPR) by mediating AMPylation or de-AMPylation of Hsc70-3/BiP. In unstressed cells, acts as an adenylyltransferase by mediating AMPylation of Hsc70-3/BiP at 'Thr-518', thereby inactivating it. In response to endoplasmic reticulum stress, acts as a phosphodiesterase by mediating removal of ATP (de-AMPylation) from Hsc70-3/BiP at 'Thr-518', leading to restore HSPA5/BiP activity. The protein is Protein adenylyltransferase Fic of Drosophila ananassae (Fruit fly).